Consider the following 536-residue polypeptide: Chaperonin GroEL (536 aa).

Residues T29–P32, D86–T90, G413, and D494 contribute to the ATP site.

The protein belongs to the chaperonin (HSP60) family. Forms a cylinder of 14 subunits composed of two heptameric rings stacked back-to-back. Interacts with the co-chaperonin GroES.

It is found in the cytoplasm. The enzyme catalyses ATP + H2O + a folded polypeptide = ADP + phosphate + an unfolded polypeptide.. Functionally, together with its co-chaperonin GroES, plays an essential role in assisting protein folding. The GroEL-GroES system forms a nano-cage that allows encapsulation of the non-native substrate proteins and provides a physical environment optimized to promote and accelerate protein folding. This is Chaperonin GroEL from Acholeplasma laidlawii (strain PG-8A).